The chain runs to 308 residues: tRNA dimethylallyltransferase (308 aa).

14-21 (GPTASGKT) lines the ATP pocket. Residue 16 to 21 (TASGKT) coordinates substrate. 3 interaction with substrate tRNA regions span residues 39 to 42 (DSAL), 163 to 167 (QRLSR), and 244 to 249 (RCVGYR).

The protein belongs to the IPP transferase family. Monomer. It depends on Mg(2+) as a cofactor.

The catalysed reaction is adenosine(37) in tRNA + dimethylallyl diphosphate = N(6)-dimethylallyladenosine(37) in tRNA + diphosphate. In terms of biological role, catalyzes the transfer of a dimethylallyl group onto the adenine at position 37 in tRNAs that read codons beginning with uridine, leading to the formation of N6-(dimethylallyl)adenosine (i(6)A). In Shewanella loihica (strain ATCC BAA-1088 / PV-4), this protein is tRNA dimethylallyltransferase.